Reading from the N-terminus, the 816-residue chain is Leucine--tRNA ligase (816 aa).

A 'HIGH' region motif is present at residues 40-51; sequence SYPSGAQLHAGH. Residues 576–580 carry the 'KMSKS' region motif; the sequence is KMSKS. Lysine 579 lines the ATP pocket.

Belongs to the class-I aminoacyl-tRNA synthetase family.

It localises to the cytoplasm. The catalysed reaction is tRNA(Leu) + L-leucine + ATP = L-leucyl-tRNA(Leu) + AMP + diphosphate. This is Leucine--tRNA ligase from Clostridium beijerinckii (strain ATCC 51743 / NCIMB 8052) (Clostridium acetobutylicum).